The primary structure comprises 529 residues: Peptide chain release factor 3 (529 aa).

A tr-type G domain is found at 10–278; it reads ARRRTFAIIS…NFVDLAPAPR (269 aa). Residues 19-26, 87-91, and 141-144 contribute to the GTP site; these read SHPDAGKT, DTPGH, and NKLD.

It belongs to the TRAFAC class translation factor GTPase superfamily. Classic translation factor GTPase family. PrfC subfamily.

The protein resides in the cytoplasm. Increases the formation of ribosomal termination complexes and stimulates activities of RF-1 and RF-2. It binds guanine nucleotides and has strong preference for UGA stop codons. It may interact directly with the ribosome. The stimulation of RF-1 and RF-2 is significantly reduced by GTP and GDP, but not by GMP. The chain is Peptide chain release factor 3 from Nitratidesulfovibrio vulgaris (strain ATCC 29579 / DSM 644 / CCUG 34227 / NCIMB 8303 / VKM B-1760 / Hildenborough) (Desulfovibrio vulgaris).